The primary structure comprises 541 residues: Chaperonin GroEL 5 (541 aa).

ATP is bound by residues 30–33, Gly-415, and Asp-496; that span reads TLGP.

Belongs to the chaperonin (HSP60) family. In terms of assembly, forms a cylinder of 14 subunits composed of two heptameric rings stacked back-to-back. Interacts with the co-chaperonin GroES.

It is found in the cytoplasm. It catalyses the reaction ATP + H2O + a folded polypeptide = ADP + phosphate + an unfolded polypeptide.. Functionally, together with its co-chaperonin GroES, plays an essential role in assisting protein folding. The GroEL-GroES system forms a nano-cage that allows encapsulation of the non-native substrate proteins and provides a physical environment optimized to promote and accelerate protein folding. The chain is Chaperonin GroEL 5 from Bradyrhizobium diazoefficiens (strain JCM 10833 / BCRC 13528 / IAM 13628 / NBRC 14792 / USDA 110).